We begin with the raw amino-acid sequence, 1091 residues long: Protein JSN1 (1091 aa).

Disordered regions lie at residues 31–51 (EYEN…KLGS) and 75–131 (HHSK…GSLT). The span at 99–111 (TVASKTPRASPSR) shows a compositional bias: polar residues. Ser-129 is subject to Phosphoserine. Thr-131 bears the Phosphothreonine mark. A phosphoserine mark is found at Ser-160 and Ser-168. The RRM domain maps to 340–426 (NTISISNVFP…APSKISFAKI (87 aa)). 2 stretches are compositionally biased toward low complexity: residues 482–494 (QQSQ…NHSS) and 507–520 (NNNN…NNSA). Disordered regions lie at residues 482–534 (QQSQ…PPPN) and 568–591 (HKGT…EFDP). Residues 557–913 (QINSLIKKSL…RLLEEVGLAS (357 aa)) enclose the PUM-HD domain. Polar residues predominate over residues 568–577 (HKGTSDTQNF). Pumilio repeat units lie at residues 617–652 (AMLD…IMLR), 653–689 (KTSK…QVTQ), 690–724 (GVKD…FIFE), 725–760 (SIIA…QSIV), and 801–837 (RLTK…IILD). The interval 911–981 (LASPSSTHNK…GSSASTLSPG (71 aa)) is disordered. Ser-913 is modified (phosphoserine). Low complexity-rich tracts occupy residues 915-935 (SSTH…SISH) and 951-979 (SVSS…STLS).

The polypeptide is Protein JSN1 (JSN1) (Saccharomyces cerevisiae (strain ATCC 204508 / S288c) (Baker's yeast)).